The primary structure comprises 509 residues: MSKKPVVLMILDGFGLTNKVDGNAVSAANKPNLDNILKKYPHTQLGASGMDVGLPEGQMGNSEVGHLNIGAGRIVYQALTKITKSISDGDFFENVALNKAIENVKKNNSTLHLLGLLSPGGVHSHIDHLKGLIKLAKEKDIKKVYIHAFLDGRDVAPSSAKEYIEDIENYMNEIGVGEIATISGRYYAMDRDKRWERVQLCYNAIVLGKGEEANSAVEGLEKSYRDNKTDEFVLPSVVLKEGKPKAKIENKDSVVFFNFRPDRARELTRAINDKVFDGFERETLDLTYVTVTEYDSTLENVEVAFPPEHLNNTLGEYVSKNGKKQLRIAETEKYAHVTFFFNGGVEEPNEGEDRVLIPSPKVATYDMQPEMNAYEVTDKLLERLDEDKYDMVILNFANPDMVGHTGVFEAAKKAIETVDECVGKIVNKVLEKDGTAFITADHGNSEEMIDYSTGKPMTAHTTNPVPFMYVSKNSKELREGGKLADIAPTMLQLMNLPKPSEMTGNSLIK.

Residues Asp12 and Ser62 each coordinate Mn(2+). The Phosphoserine intermediate role is filled by Ser62. Substrate-binding positions include His123, 153 to 154 (RD), Arg185, Arg191, 260 to 263 (RPDR), and Lys333. 5 residues coordinate Mn(2+): Asp400, His404, Asp441, His442, and His460.

Belongs to the BPG-independent phosphoglycerate mutase family. As to quaternary structure, monomer. Mn(2+) serves as cofactor.

The catalysed reaction is (2R)-2-phosphoglycerate = (2R)-3-phosphoglycerate. It functions in the pathway carbohydrate degradation; glycolysis; pyruvate from D-glyceraldehyde 3-phosphate: step 3/5. Its function is as follows. Catalyzes the interconversion of 2-phosphoglycerate and 3-phosphoglycerate. This chain is 2,3-bisphosphoglycerate-independent phosphoglycerate mutase, found in Clostridium botulinum (strain ATCC 19397 / Type A).